A 376-amino-acid polypeptide reads, in one-letter code: N-acetyldiaminopimelate deacetylase (376 aa).

The active site involves Asp69. The active-site Proton acceptor is Glu128.

Belongs to the peptidase M20A family. N-acetyldiaminopimelate deacetylase subfamily.

The enzyme catalyses N-acetyl-(2S,6S)-2,6-diaminopimelate + H2O = (2S,6S)-2,6-diaminopimelate + acetate. Its pathway is amino-acid biosynthesis; L-lysine biosynthesis via DAP pathway; LL-2,6-diaminopimelate from (S)-tetrahydrodipicolinate (acetylase route): step 3/3. Its function is as follows. Catalyzes the conversion of N-acetyl-diaminopimelate to diaminopimelate and acetate. This is N-acetyldiaminopimelate deacetylase from Streptococcus pneumoniae (strain P1031).